A 136-amino-acid polypeptide reads, in one-letter code: Small ribosomal subunit protein uS19 (136 aa).

It belongs to the universal ribosomal protein uS19 family.

Functionally, protein S19 forms a complex with S13 that binds strongly to the 16S ribosomal RNA. The polypeptide is Small ribosomal subunit protein uS19 (rps19) (Methanothermobacter thermautotrophicus (strain ATCC 29096 / DSM 1053 / JCM 10044 / NBRC 100330 / Delta H) (Methanobacterium thermoautotrophicum)).